The sequence spans 323 residues: Ribosomal RNA small subunit methyltransferase H (323 aa).

S-adenosyl-L-methionine is bound by residues 44-46 (AGH), D64, Y91, D112, and Q119.

The protein belongs to the methyltransferase superfamily. RsmH family.

It localises to the cytoplasm. It carries out the reaction cytidine(1402) in 16S rRNA + S-adenosyl-L-methionine = N(4)-methylcytidine(1402) in 16S rRNA + S-adenosyl-L-homocysteine + H(+). Specifically methylates the N4 position of cytidine in position 1402 (C1402) of 16S rRNA. The polypeptide is Ribosomal RNA small subunit methyltransferase H (Nitratidesulfovibrio vulgaris (strain ATCC 29579 / DSM 644 / CCUG 34227 / NCIMB 8303 / VKM B-1760 / Hildenborough) (Desulfovibrio vulgaris)).